We begin with the raw amino-acid sequence, 232 residues long: Thiamine import ATP-binding protein ThiQ (232 aa).

The ABC transporter domain occupies 2 to 230 (LKLTDITWLY…KASASALLGI (229 aa)). Residue 32 to 39 (GPSGAGKS) coordinates ATP.

The protein belongs to the ABC transporter superfamily. Thiamine importer (TC 3.A.1.19.1) family. In terms of assembly, the complex is composed of two ATP-binding proteins (ThiQ), two transmembrane proteins (ThiP) and a solute-binding protein (ThiB).

Its subcellular location is the cell inner membrane. The catalysed reaction is thiamine(out) + ATP + H2O = thiamine(in) + ADP + phosphate + H(+). Functionally, part of the ABC transporter complex ThiBPQ involved in thiamine import. Responsible for energy coupling to the transport system. This is Thiamine import ATP-binding protein ThiQ from Shigella sonnei (strain Ss046).